The chain runs to 781 residues: Poly(ADP-ribose) glycohydrolase 1 (781 aa).

3 disordered regions span residues 28–87 (AHQV…VSEN), 102–131 (SLDN…NNKS), and 206–232 (ADST…DADS). Residues 106–121 (VTERSEHTLDNHKSTE) show a composition bias toward basic and acidic residues.

Belongs to the poly(ADP-ribose) glycohydrolase family. As to expression, expressed in head and tail neurons. Also detected in the central nerve cord and motor neurons.

Its subcellular location is the nucleus. It catalyses the reaction [(1''-&gt;2')-ADP-alpha-D-ribose](n) + H2O = [(1''-&gt;2')-ADP-alpha-D-ribose](n-1) + ADP-D-ribose. Functionally, poly(ADP-ribose) synthesized after DNA damage is only present transiently and is rapidly degraded by poly(ADP-ribose) glycohydrolase. Poly(ADP-ribose) metabolism may be required for maintenance of the normal function of neuronal cells. The polypeptide is Poly(ADP-ribose) glycohydrolase 1 (Caenorhabditis elegans).